An 87-amino-acid polypeptide reads, in one-letter code: Cobalt transport protein CbiN (87 aa).

Helical transmembrane passes span 4–24 (LLLLLILLIFAAKVTAEEWAG) and 58–78 (MLFSLQAAIGSLIIGYFLGYY).

The protein belongs to the CbiN family. In terms of assembly, forms an energy-coupling factor (ECF) transporter complex composed of an ATP-binding protein (A component, CbiO), a transmembrane protein (T component, CbiQ) and 2 possible substrate-capture proteins (S components, CbiM and CbiN) of unknown stoichimetry.

It localises to the cell membrane. The protein operates within cofactor biosynthesis; adenosylcobalamin biosynthesis. Part of the energy-coupling factor (ECF) transporter complex CbiMNOQ involved in cobalt import. In Archaeoglobus fulgidus (strain ATCC 49558 / DSM 4304 / JCM 9628 / NBRC 100126 / VC-16), this protein is Cobalt transport protein CbiN.